The chain runs to 296 residues: NmrA-like family domain-containing protein 1 (296 aa).

NADP(+) contacts are provided by residues 11–16 (GATGAQ), 37–41 (RSPGR), 58–59 (DQ), 79–81 (TNF), Lys-133, and 155–158 (YYEN).

Belongs to the NmrA-type oxidoreductase family. As to quaternary structure, homodimer.

The protein resides in the cytoplasm. Its subcellular location is the perinuclear region. It is found in the nucleus. Functionally, redox sensor protein. Undergoes restructuring and subcellular redistribution in response to changes in intracellular NADPH/NADP(+) levels. In Gallus gallus (Chicken), this protein is NmrA-like family domain-containing protein 1 (NMRAL1).